Consider the following 396-residue polypeptide: Probable 20S rRNA accumulation protein 4 (396 aa).

The protein belongs to the TSR4 family.

It is found in the cytoplasm. The protein localises to the nucleus. The protein resides in the nucleolus. Required for processing of the 20S pre-rRNA at site D to generate mature 18S rRNA. The chain is Probable 20S rRNA accumulation protein 4 from Schizosaccharomyces pombe (strain 972 / ATCC 24843) (Fission yeast).